Consider the following 391-residue polypeptide: 3-ketoacyl-CoA thiolase (391 aa).

The active-site Acyl-thioester intermediate is cysteine 95. Catalysis depends on proton acceptor residues histidine 347 and cysteine 377.

Belongs to the thiolase-like superfamily. Thiolase family. Heterotetramer of two alpha chains (FadB) and two beta chains (FadA).

Its subcellular location is the cytoplasm. It catalyses the reaction an acyl-CoA + acetyl-CoA = a 3-oxoacyl-CoA + CoA. It functions in the pathway lipid metabolism; fatty acid beta-oxidation. Catalyzes the final step of fatty acid oxidation in which acetyl-CoA is released and the CoA ester of a fatty acid two carbons shorter is formed. This chain is 3-ketoacyl-CoA thiolase, found in Alcanivorax borkumensis (strain ATCC 700651 / DSM 11573 / NCIMB 13689 / SK2).